We begin with the raw amino-acid sequence, 282 residues long: MGMSTLTSKLESLLNRGKGTEQRLARFLLDSRDNFVAMNVAELAQAAGVSSASVIRFTRQMGYRGYSDFKVDYLSDEKQYKAESLSGSLNPYDDTEQIIAKSGQMFITAIEKSLELLDPNTMDEIAQKIVEAKRIVLFGVGTSAIVAYDIFYKLIRVNKYALFSPDLHVQLSYSSNVDADDLVIAITAKGNTPDINHMLKLANKKGCSTIVLTRFGQDEAVRLADLVLPYFYDEQLFQTGVITPQVLQMVVFDTLFFKYLTLTNEDVVLALQKEREAIIQLG.

Positions 4–80 (STLTSKLESL…VDYLSDEKQY (77 aa)) constitute an HTH rpiR-type domain. Residues 40 to 59 (VAELAQAAGVSSASVIRFTR) constitute a DNA-binding region (H-T-H motif). Residues 125–265 (IAQKIVEAKR…FFKYLTLTNE (141 aa)) enclose the SIS domain.

This is an uncharacterized protein from Providencia stuartii.